The chain runs to 268 residues: Undecaprenyl-diphosphatase (268 aa).

A run of 8 helical transmembrane segments spans residues 4–24, 50–70, 84–104, 109–129, 144–164, 185–205, 214–234, and 247–267; these read STTL…FIPV, IQLG…VSVI, VAVL…HGFI, FETP…LLFV, LPLN…VPGV, AEFS…FDLF, SALG…VLVV, and ALFG…LLAG.

It belongs to the UppP family.

Its subcellular location is the cell inner membrane. The enzyme catalyses di-trans,octa-cis-undecaprenyl diphosphate + H2O = di-trans,octa-cis-undecaprenyl phosphate + phosphate + H(+). Functionally, catalyzes the dephosphorylation of undecaprenyl diphosphate (UPP). Confers resistance to bacitracin. The protein is Undecaprenyl-diphosphatase of Cereibacter sphaeroides (strain ATCC 17029 / ATH 2.4.9) (Rhodobacter sphaeroides).